The following is a 357-amino-acid chain: Probable cinnamyl alcohol dehydrogenase (357 aa).

Cys-47 is a binding site for Zn(2+). Thr-49 serves as a coordination point for NADP(+). 7 residues coordinate Zn(2+): His-69, Glu-70, Cys-100, Cys-103, Cys-106, Cys-114, and Cys-163. NADP(+)-binding positions include Thr-167, 188 to 193, 211 to 216, Thr-251, Gly-275, and 298 to 300; these read GLGGVG, SSSDKK, and SFI.

It belongs to the zinc-containing alcohol dehydrogenase family. Homodimer. The cofactor is Zn(2+).

The catalysed reaction is (E)-cinnamyl alcohol + NADP(+) = (E)-cinnamaldehyde + NADPH + H(+). It catalyses the reaction (E)-coniferol + NADP(+) = (E)-coniferaldehyde + NADPH + H(+). The enzyme catalyses (E)-sinapyl alcohol + NADP(+) = (E)-sinapaldehyde + NADPH + H(+). It carries out the reaction (E)-4-coumaroyl alcohol + NADP(+) = (E)-4-coumaraldehyde + NADPH + H(+). The catalysed reaction is (E)-caffeyl alcohol + NADP(+) = (E)-caffeyl aldehyde + NADPH + H(+). The protein operates within aromatic compound metabolism; phenylpropanoid biosynthesis. In terms of biological role, involved in lignin biosynthesis. Catalyzes the final step specific for the production of lignin monomers. Catalyzes the NADPH-dependent reduction of coniferaldehyde, 5-hydroxyconiferaldehyde, sinapaldehyde, 4-coumaraldehyde and caffeyl aldehyde to their respective alcohols. This is Probable cinnamyl alcohol dehydrogenase from Populus deltoides (Eastern poplar).